The sequence spans 51 residues: Large ribosomal subunit protein bL33 (51 aa).

The protein belongs to the bacterial ribosomal protein bL33 family.

The sequence is that of Large ribosomal subunit protein bL33 from Acidithiobacillus ferrooxidans (strain ATCC 53993 / BNL-5-31) (Leptospirillum ferrooxidans (ATCC 53993)).